The following is a 68-amino-acid chain: MVQKKSQSGKTVTVEQIGSPIRNSQIQRATLKGLGLNKMRRRRVLEDTLCVRGMIARVRHLVRVIDED.

The protein belongs to the universal ribosomal protein uL30 family. As to quaternary structure, part of the 50S ribosomal subunit.

The polypeptide is Large ribosomal subunit protein uL30 (Bartonella tribocorum (strain CIP 105476 / IBS 506)).